Here is an 88-residue protein sequence, read N- to C-terminus: Small ribosomal subunit protein uS17 (88 aa).

Belongs to the universal ribosomal protein uS17 family. Part of the 30S ribosomal subunit.

Functionally, one of the primary rRNA binding proteins, it binds specifically to the 5'-end of 16S ribosomal RNA. The sequence is that of Small ribosomal subunit protein uS17 from Azotobacter vinelandii (strain DJ / ATCC BAA-1303).